The chain runs to 91 residues: Molybdopterin synthase sulfur carrier subunit (91 aa).

The residue at position 91 (Gly91) is a 1-thioglycine; alternate. At Gly91 the chain carries Glycyl adenylate; alternate.

The protein belongs to the MoaD family. MOCS2A subfamily. Heterotetramer; composed of 2 small (MOCS2A) and 2 large (MOCS2B) subunits. C-terminal thiocarboxylation occurs in 2 steps, it is first acyl-adenylated (-COAMP) via the hesA/moeB/thiF part of uba4, then thiocarboxylated (-COSH) via the rhodanese domain of uba4.

The protein resides in the cytoplasm. The protein operates within cofactor biosynthesis; molybdopterin biosynthesis. In terms of biological role, acts as a sulfur carrier required for molybdopterin biosynthesis. Component of the molybdopterin synthase complex that catalyzes the conversion of precursor Z into molybdopterin by mediating the incorporation of 2 sulfur atoms into precursor Z to generate a dithiolene group. In the complex, serves as sulfur donor by being thiocarboxylated (-COSH) at its C-terminus by uba4. After interaction with MOCS2B, the sulfur is then transferred to precursor Z to form molybdopterin. This Emericella nidulans (strain FGSC A4 / ATCC 38163 / CBS 112.46 / NRRL 194 / M139) (Aspergillus nidulans) protein is Molybdopterin synthase sulfur carrier subunit.